Reading from the N-terminus, the 233-residue chain is Ras-related protein RabV (233 aa).

15-22 (GEKEVGKS) serves as a coordination point for GTP. Residues 37 to 45 (YIPTIGIDF) carry the Effector region motif. GTP is bound by residues 63-67 (DYVSH) and 122-125 (TKSD). The segment at 143 to 182 (QNNNNNNNNNNNNNNNNNNNNNNNNNNNNNSNNNNNNNLQ) is disordered. Residues 144–180 (NNNNNNNNNNNNNNNNNNNNNNNNNNNNNSNNNNNNN) are compositionally biased toward low complexity.

This sequence belongs to the small GTPase superfamily. Rab family.

The sequence is that of Ras-related protein RabV (rabV) from Dictyostelium discoideum (Social amoeba).